Consider the following 401-residue polypeptide: Cysteine desulfurase CsdA (401 aa).

At K222 the chain carries N6-(pyridoxal phosphate)lysine. C358 acts as the Cysteine persulfide intermediate in catalysis.

The protein belongs to the class-V pyridoxal-phosphate-dependent aminotransferase family. Csd subfamily. As to quaternary structure, homodimer. Forms a heterodimer with CsdE. Pyridoxal 5'-phosphate serves as cofactor.

It catalyses the reaction (sulfur carrier)-H + L-cysteine = (sulfur carrier)-SH + L-alanine. The enzyme catalyses L-selenocysteine + AH2 = hydrogenselenide + L-alanine + A + H(+). It carries out the reaction 3-sulfino-L-alanine + H2O = sulfite + L-alanine + H(+). Cysteine desulfurase activity is increased 2-fold in the presence of CsdE. Its function is as follows. Catalyzes the removal of elemental sulfur and selenium atoms from L-cysteine, L-cystine, L-selenocysteine, and L-selenocystine to produce L-alanine, and transiently retains the released sulfur atom on a cysteine residue, in the form of a persulfide. Can also desulfinate L-cysteine sulfinate (3-sulfino-L-alanine), which is the best substrate of the enzyme. Functions as a selenium delivery protein in the pathway for the biosynthesis of selenophosphate. Seems to participate in Fe/S biogenesis by recruiting the SufBCD-SufE proteins. Transfers sulfur to CsdE that increases the cysteine desulfurase activity of CsdA. Can also transfer sulfur directly to TcdA/CsdL in vitro. Appears to support the function of TcdA in the generation of cyclic threonylcarbamoyladenosine at position 37 (ct(6)A37) in tRNAs that read codons beginning with adenine. This is Cysteine desulfurase CsdA (csdA) from Escherichia coli (strain K12).